Reading from the N-terminus, the 941-residue chain is Coiled-coil domain-containing protein 39 (941 aa).

Coiled coils occupy residues 16–122 (AIPV…ENGI), 164–273 (AQQD…ESEI), 306–605 (QLKG…EIKV), and 665–825 (IKAA…EEQD). A disordered region spans residues 868-941 (PTASTKGSRQ…SNVKSKKSSK (74 aa)). 2 stretches are compositionally biased toward low complexity: residues 871–903 (STKG…SQSS) and 914–934 (SSSL…SSNV). Phosphoserine is present on residues serine 892 and serine 900.

It belongs to the CCDC39 family. Mainly expressed in nasal brushings and, to a lesser extent, in lungs and testis.

It localises to the cytoplasm. It is found in the cytoskeleton. Its subcellular location is the cilium axoneme. Required for assembly of dynein regulatory complex (DRC) and inner dynein arm (IDA) complexes, which are responsible for ciliary beat regulation, thereby playing a central role in motility in cilia and flagella. Probably acts together with CCDC40 to form a molecular ruler that determines the 96 nanometer (nm) repeat length and arrangements of components in cilia and flagella. Not required for outer dynein arm complexes assembly. The sequence is that of Coiled-coil domain-containing protein 39 from Homo sapiens (Human).